A 56-amino-acid polypeptide reads, in one-letter code: Small ribosomal subunit protein uS14 (56 aa).

Positions 21, 24, 39, and 42 each coordinate Zn(2+).

This sequence belongs to the universal ribosomal protein uS14 family. Zn(2+) is required as a cofactor.

This Eremothecium gossypii (strain ATCC 10895 / CBS 109.51 / FGSC 9923 / NRRL Y-1056) (Yeast) protein is Small ribosomal subunit protein uS14 (RPS29).